Reading from the N-terminus, the 89-residue chain is UPF0298 protein GK1096 (89 aa).

Belongs to the UPF0298 family.

Its subcellular location is the cytoplasm. This is UPF0298 protein GK1096 from Geobacillus kaustophilus (strain HTA426).